The primary structure comprises 303 residues: Probable porphobilinogen deaminase (303 aa).

C233 carries the post-translational modification S-(dipyrrolylmethanemethyl)cysteine.

Belongs to the HMBS family. Dipyrromethane is required as a cofactor.

The enzyme catalyses 4 porphobilinogen + H2O = hydroxymethylbilane + 4 NH4(+). The protein operates within porphyrin-containing compound metabolism; protoporphyrin-IX biosynthesis; coproporphyrinogen-III from 5-aminolevulinate: step 2/4. Its function is as follows. Tetrapolymerization of the monopyrrole PBG into the hydroxymethylbilane pre-uroporphyrinogen in several discrete steps. The sequence is that of Probable porphobilinogen deaminase from Methanocella arvoryzae (strain DSM 22066 / NBRC 105507 / MRE50).